The primary structure comprises 675 residues: Protein PALS1 (675 aa).

2 disordered regions span residues 1-34 (MTTS…KHRE) and 51-78 (RRSA…KKQE). Residues 1–345 (MTTSHMNGHV…QQIKPPPAKE (345 aa)) form a required for the correct localization of PALS1 and PATJ at cell-cell contacts and the normal formation of tight junctions and adherens junctions region. 2 stretches are compositionally biased toward basic and acidic residues: residues 10–34 (VTEE…KHRE) and 54–78 (AQLE…KKQE). Phosphoserine is present on residues serine 14 and serine 25. An interaction with PARD6B region spans residues 21 to 140 (VDLASPEEHQ…LKHIQHTLID (120 aa)). 2 positions are modified to phosphoserine: serine 83 and serine 84. L27 domains lie at 120–177 (KILE…NKAS) and 179–235 (PFPL…MQLE). The interaction with LIN7C stretch occupies residues 181-243 (PLISNAQDLA…LEPITDERVY (63 aa)). The region spanning 256 to 336 (IVRIEKARDI…TLTFVLIPSQ (81 aa)) is the PDZ domain. Residues 345–417 (ETVIHVKAHF…PGKSFQQQRE (73 aa)) form the SH3 domain. The Guanylate kinase-like domain occupies 479–660 (KRPIILIGPQ…AYQELLRLIN (182 aa)). Position 486–493 (486–493 (GPQNCGQN)) interacts with ATP.

This sequence belongs to the MAGUK family. As to quaternary structure, heterodimer with MPP1. Forms a heterotrimeric complex composed of PALS1, LIN7B and PATJ; the N-terminal L27 domain of PALS1 interacts with the L27 domain of PATJ and the C-terminal L27 domain of PALS1 interacts with the L27 domain of LIN7B. Component of a complex composed of PALS1, CRB1 and MPP4. Component of a complex whose core is composed of ARHGAP17, AMOT, PALS1, PATJ and PARD3/PAR3. Component of a complex composed of PALS1, CRB1 and EPB41L5. Within the complex, interacts (via HOOK domain) with EPB41L5 (via FERM domain), and interacts with CRB1 (via intracellular domain). Component of a complex composed of PALS1, MPP3 and CRB1; PALS1 acts as a bridging protein between MPP3 (via guanylate kinase-like domain) and CRB1. Component of a complex composed of CRB3, PALS1 and PATJ. As part of the Crumbs complex; interacts with WWP1, the interaction is enhanced by AMOTL2 and facilitates WWP1 localization to the plasma membrane. The Crumbs complex promotes monoubiquitination of AMOTL2 by WWP1, which activates the Hippo signaling pathway. Interacts (via PDZ domain) with PATJ (via N-terminus). Interacts with EZR. Interacts (via PDZ domain) with CRB1 (via C-terminal ERLI motif). While the PDZ domain is sufficient for interaction with CRB1, the adjacent SH3 and guanylate kinase-like domains are likely to contribute to a high affinity interaction. Interacts with WWTR1/TAZ (via WW domain). Interacts with MPP7. Interacts (via PDZ domain) with CRB3 (via C-terminus). Interacts with LIN7C. Interacts with MPDZ. Interacts with PARD6B. Interacts with SC6A1. Interacts with CDH5; the interaction promotes PALS1 localization to cell junctions and is required for CDH5-mediated vascular lumen formation and endothelial cell. Interacts with NPHP1 (via coiled coil and SH3 domains). Interacts with NPHP4. Interacts with CRB2.

Its subcellular location is the golgi apparatus. It is found in the cell membrane. The protein resides in the endomembrane system. It localises to the cell junction. The protein localises to the tight junction. Its subcellular location is the adherens junction. It is found in the cell projection. The protein resides in the axon. It localises to the perikaryon. The protein localises to the apical cell membrane. Its function is as follows. Plays a role in tight junction biogenesis and in the establishment of cell polarity in epithelial cells. Also involved in adherens junction biogenesis by ensuring correct localization of the exocyst complex protein EXOC4/SEC8 which allows trafficking of adherens junction structural component CDH1 to the cell surface. Plays a role through its interaction with CDH5 in vascular lumen formation and endothelial membrane polarity. Required during embryonic and postnatal retinal development. Required for the maintenance of cerebellar progenitor cells in an undifferentiated proliferative state, preventing premature differentiation, and is required for cerebellar histogenesis, fissure formation, cerebellar layer organization and cortical development. Plays a role in neuronal progenitor cell survival, potentially via promotion of mTOR signaling. Plays a role in the radial and longitudinal extension of the myelin sheath in Schwann cells. May modulate SC6A1/GAT1-mediated GABA uptake by stabilizing the transporter. May play a role in the T-cell receptor-mediated activation of NF-kappa-B. Required for localization of EZR to the apical membrane of parietal cells and may play a role in the dynamic remodeling of the apical cytoskeleton. Required for the normal polarized localization of the vesicular marker STX4. Required for the correct trafficking of the myelin proteins PMP22 and MAG. Involved in promoting phosphorylation and cytoplasmic retention of transcriptional coactivators YAP1 and WWTR1/TAZ which leads to suppression of TGFB1-dependent transcription of target genes such as CCN2/CTGF, SERPINE1/PAI1, SNAI1/SNAIL1 and SMAD7. The protein is Protein PALS1 of Pongo abelii (Sumatran orangutan).